A 546-amino-acid chain; its full sequence is 2-isopropylmalate synthase (546 aa).

Residues 8 to 271 form the Pyruvate carboxyltransferase domain; that stretch reads ILIFDTTLRD…NSFFGRSSDS (264 aa). Residues Asp17, His208, His210, and Asn244 each contribute to the Mn(2+) site. A regulatory domain region spans residues 408–546; it reads QLSHVQVSCG…KNKVLSNPKK (139 aa).

This sequence belongs to the alpha-IPM synthase/homocitrate synthase family. LeuA type 1 subfamily. As to quaternary structure, homodimer. The cofactor is Mn(2+).

It localises to the cytoplasm. The enzyme catalyses 3-methyl-2-oxobutanoate + acetyl-CoA + H2O = (2S)-2-isopropylmalate + CoA + H(+). The protein operates within amino-acid biosynthesis; L-leucine biosynthesis; L-leucine from 3-methyl-2-oxobutanoate: step 1/4. Functionally, catalyzes the condensation of the acetyl group of acetyl-CoA with 3-methyl-2-oxobutanoate (2-ketoisovalerate) to form 3-carboxy-3-hydroxy-4-methylpentanoate (2-isopropylmalate). This Prochlorococcus marinus subsp. pastoris (strain CCMP1986 / NIES-2087 / MED4) protein is 2-isopropylmalate synthase.